Consider the following 338-residue polypeptide: Penicillin V acylase (338 aa).

A propeptide spans 1–3 (MLG) (removed in mature form). Residue cysteine 4 is the Nucleophile of the active site.

The protein belongs to the peptidase C59 family. In terms of assembly, homotetramer. In terms of processing, expressed as an inactive precursor that is cleaved autocatalytically at Gly-3/Cys-4 to generate an active enzyme. Processing exposes a catalytic N-terminal nucleophile residue with a free alpha amino group.

It carries out the reaction a penicillin + H2O = 6-aminopenicillanate + a carboxylate. With respect to regulation, hydrolase activity is rapidly inhibited by lysine modifying reagents. Functionally, catalyzes the hydrolysis of penicillin V to 6-aminopenicillanate (6-APA). Exhibits high specificity for penicillin V. Penicillin G and other related compounds are hydrolyzed at less than 10% of the rate of penicillin V. Among the cephalosporins, cephalosporin C is resistant to cleavage, whereas cephalosporin G is cleaved at about 1% of the rate of cleavage of penicillin V. The chain is Penicillin V acylase from Lysinibacillus sphaericus (Bacillus sphaericus).